A 662-amino-acid chain; its full sequence is Biosynthetic arginine decarboxylase (662 aa).

Position 126 is an N6-(pyridoxal phosphate)lysine (K126). Substrate is bound at residue 308–318; that stretch reads LNVGGGLGVDY.

The protein belongs to the Orn/Lys/Arg decarboxylase class-II family. SpeA subfamily. Mg(2+) is required as a cofactor. The cofactor is pyridoxal 5'-phosphate.

It catalyses the reaction L-arginine + H(+) = agmatine + CO2. Functionally, catalyzes the biosynthesis of agmatine from arginine. The chain is Biosynthetic arginine decarboxylase from Deinococcus radiodurans (strain ATCC 13939 / DSM 20539 / JCM 16871 / CCUG 27074 / LMG 4051 / NBRC 15346 / NCIMB 9279 / VKM B-1422 / R1).